The primary structure comprises 85 residues: Alpha-insect toxin Bot14 (85 aa).

An N-terminal signal peptide occupies residues 1–18; the sequence is MSSLMISTAMKGKAPYRQ. In terms of domain architecture, LCN-type CS-alpha/beta spans 20–84; it reads RDGYIAQPHN…GIIVHGEKCH (65 aa). 4 disulfides stabilise this stretch: cysteine 30/cysteine 83, cysteine 34/cysteine 55, cysteine 41/cysteine 65, and cysteine 45/cysteine 67.

It belongs to the long (4 C-C) scorpion toxin superfamily. Sodium channel inhibitor family. Alpha subfamily. Expressed by the venom gland.

Its subcellular location is the secreted. Functionally, alpha toxins bind voltage-independently at site-3 of sodium channels (Nav) and inhibit the inactivation of the activated channels, thereby blocking neuronal transmission. This toxin is active only on insects. The polypeptide is Alpha-insect toxin Bot14 (Buthus occitanus tunetanus (Common European scorpion)).